The chain runs to 282 residues: Bis(5'-nucleosyl)-tetraphosphatase, symmetrical (282 aa).

The protein belongs to the Ap4A hydrolase family.

The enzyme catalyses P(1),P(4)-bis(5'-adenosyl) tetraphosphate + H2O = 2 ADP + 2 H(+). Hydrolyzes diadenosine 5',5'''-P1,P4-tetraphosphate to yield ADP. The polypeptide is Bis(5'-nucleosyl)-tetraphosphatase, symmetrical (Salmonella agona (strain SL483)).